The primary structure comprises 66 residues: MKREIHPEYKKAKVVCACGNSFETGSTKEELKVEICSSCHPFFTGKQKLVDSGGRVEKFKRKYGLE.

Residues C16, C18, C36, and C39 each contribute to the Zn(2+) site.

It belongs to the bacterial ribosomal protein bL31 family. Type A subfamily. In terms of assembly, part of the 50S ribosomal subunit. Zn(2+) serves as cofactor.

Binds the 23S rRNA. In Natranaerobius thermophilus (strain ATCC BAA-1301 / DSM 18059 / JW/NM-WN-LF), this protein is Large ribosomal subunit protein bL31.